The following is a 320-amino-acid chain: Olfactory receptor 5C1 (320 aa).

Over 1 to 29 (MNSENLTRAAVAPAEFVLLGITNRWDLRV) the chain is Extracellular. The N-linked (GlcNAc...) asparagine glycan is linked to Asn5. Residues 30–50 (ALFLTCLPVYLVSLLGNMGMA) form a helical membrane-spanning segment. The Cytoplasmic portion of the chain corresponds to 51–58 (LLIRMDAR). A helical membrane pass occupies residues 59–79 (LHTPMYFFLANLSLLDACYSS). The Extracellular segment spans residues 80–103 (AIGPKMLVDLLLPRATIPYTACAL). Cysteines 101 and 193 form a disulfide. Residues 104 to 124 (QMFVFAGLADTECCLLAAMAY) form a helical membrane-spanning segment. The Cytoplasmic segment spans residues 125-143 (DRYVAIRNPLLYTTAMSQR). The helical transmembrane segment at 144-164 (LCLALLGASGLGGAVSAFVHT) threads the bilayer. Over 165 to 200 (TLTFRLSFCRSRKINSFFCDIPPLLAISCSDTSLNE) the chain is Extracellular. The helical transmembrane segment at 201–221 (LLLFAICGFIQTATVLAITVS) threads the bilayer. Topologically, residues 222-241 (YGFIAGAVIHMRSVEGSRRA) are cytoplasmic. A helical transmembrane segment spans residues 242–262 (ASTGGSHLTAVAMMYGTLIFM). Topologically, residues 263–275 (YLRPSSSYALDTD) are extracellular. The chain crosses the membrane as a helical span at residues 276–296 (KMASVFYTLVIPSLNPLIYSL). Topologically, residues 297-320 (RNKEVKEALRQTWSRFHCPGQGSQ) are cytoplasmic.

It belongs to the G-protein coupled receptor 1 family.

It is found in the cell membrane. In terms of biological role, odorant receptor. The polypeptide is Olfactory receptor 5C1 (OR5C1) (Homo sapiens (Human)).